We begin with the raw amino-acid sequence, 377 residues long: Protein RecA (377 aa).

Residues 1–13 (MSNEGKPLQSTES) are compositionally biased toward polar residues. The tract at residues 1-20 (MSNEGKPLQSTESTKIDAKS) is disordered. 82 to 89 (GPESSGKT) provides a ligand contact to ATP. Residues 346 to 377 (GSEVSANSMRPLASAARQASSRPKLSQVSANG) are disordered. The segment covering 362 to 377 (RQASSRPKLSQVSANG) has biased composition (polar residues).

It belongs to the RecA family.

It localises to the cytoplasm. Its function is as follows. Can catalyze the hydrolysis of ATP in the presence of single-stranded DNA, the ATP-dependent uptake of single-stranded DNA by duplex DNA, and the ATP-dependent hybridization of homologous single-stranded DNAs. It interacts with LexA causing its activation and leading to its autocatalytic cleavage. The sequence is that of Protein RecA from Prochlorococcus marinus (strain NATL1A).